The following is a 417-amino-acid chain: RH-like protein IA (417 aa).

11 helical membrane passes run 12–32 (CLPL…YFFT), 44–64 (LVAS…GFGF), 77–97 (VAFS…LDGF), 125–145 (ISVD…MVLV), 172–192 (IYVF…KPLP), 203–223 (TIPS…WPSF), 238–258 (VFNT…GSSL), 265–285 (ISMS…GTSC), 287–307 (LITS…ISIG), 331–351 (NFSL…VHHT), and 358–378 (MIGF…TIAL).

It belongs to the ammonium transporter (TC 2.A.49) family. Rh subfamily.

It localises to the membrane. Its function is as follows. May be part of an oligomeric complex which is likely to have a transport or channel function in the erythrocyte membrane. The polypeptide is RH-like protein IA (Pan troglodytes (Chimpanzee)).